A 364-amino-acid chain; its full sequence is Phosphoserine aminotransferase (364 aa).

Arginine 46 contacts L-glutamate. Pyridoxal 5'-phosphate contacts are provided by residues 80–81, tryptophan 106, threonine 157, aspartate 176, and glutamine 199; that span reads AR. Lysine 200 carries the N6-(pyridoxal phosphate)lysine modification. 241-242 is a binding site for pyridoxal 5'-phosphate; sequence NT.

The protein belongs to the class-V pyridoxal-phosphate-dependent aminotransferase family. SerC subfamily. In terms of assembly, homodimer. The cofactor is pyridoxal 5'-phosphate.

It is found in the cytoplasm. It catalyses the reaction O-phospho-L-serine + 2-oxoglutarate = 3-phosphooxypyruvate + L-glutamate. The enzyme catalyses 4-(phosphooxy)-L-threonine + 2-oxoglutarate = (R)-3-hydroxy-2-oxo-4-phosphooxybutanoate + L-glutamate. The protein operates within amino-acid biosynthesis; L-serine biosynthesis; L-serine from 3-phospho-D-glycerate: step 2/3. Its pathway is cofactor biosynthesis; pyridoxine 5'-phosphate biosynthesis; pyridoxine 5'-phosphate from D-erythrose 4-phosphate: step 3/5. In terms of biological role, catalyzes the reversible conversion of 3-phosphohydroxypyruvate to phosphoserine and of 3-hydroxy-2-oxo-4-phosphonooxybutanoate to phosphohydroxythreonine. The polypeptide is Phosphoserine aminotransferase (Vibrio cholerae serotype O1 (strain ATCC 39315 / El Tor Inaba N16961)).